The chain runs to 267 residues: MTSVSDCFAQLRDRGQCALIPFLTAGDPDLATTASALRQLDASGADLIELGVPYSDPLADGPVIQAAATRALQRGTRLDQVLEMVTELSPEIRAPIILFTYYNPIYHRGVAEFLQQIAKAGVRGLVVPDLPLEESENLLQQAADLGIEVTLLVAPTSSKERIEKIALRSQGFIYLVSTTGVTGMRTKVENRVQDLIADLRQVTDKPIGVGFGISRTEHARQVMDWGADAAIVGSAFVNRLSEGSPSQGLSAISTFCRSLKSSLLLDA.

Catalysis depends on proton acceptor residues glutamate 49 and aspartate 60.

This sequence belongs to the TrpA family. As to quaternary structure, tetramer of two alpha and two beta chains.

It catalyses the reaction (1S,2R)-1-C-(indol-3-yl)glycerol 3-phosphate + L-serine = D-glyceraldehyde 3-phosphate + L-tryptophan + H2O. It functions in the pathway amino-acid biosynthesis; L-tryptophan biosynthesis; L-tryptophan from chorismate: step 5/5. Its function is as follows. The alpha subunit is responsible for the aldol cleavage of indoleglycerol phosphate to indole and glyceraldehyde 3-phosphate. The sequence is that of Tryptophan synthase alpha chain from Acaryochloris marina (strain MBIC 11017).